The following is a 209-amino-acid chain: Geminin (209 aa).

Positions 1–79 (MNPSMKQKQE…PESSENKNLG (79 aa)) are disordered. Basic and acidic residues predominate over residues 7–16 (QKQEEIKENI). An N6-acetyllysine modification is found at lysine 27. Residues serine 34, serine 36, serine 49, serine 63, and serine 64 each carry the phosphoserine modification. Residues 82–161 (TQESFDLMIK…AELIERLNGE (80 aa)) are necessary and sufficient for interaction with IDAS and CDT1. Residues 94–144 (PSSQYWKEVAEKRRKALYEALKENEKLHKEIEQKDNEIARLKKENKELAEV) adopt a coiled-coil conformation. Residues 164–209 (DNFESLDNQEFDSEEETVEDSLVEDSEIGTCAEGTVSSSTDAKPCI) form a disordered region. The homeodomain binding stretch occupies residues 170 to 190 (DNQEFDSEEETVEDSLVEDSE). Acidic residues predominate over residues 170–190 (DNQEFDSEEETVEDSLVEDSE). The residue at position 184 (serine 184) is a Phosphoserine; by CK2. Residues 198 to 209 (TVSSSTDAKPCI) show a composition bias toward polar residues.

It belongs to the geminin family. In terms of assembly, homotetramer. Interacts with CDT1; this inhibits binding of the MCM complex to origins of replication. The complex with CDT1 exists in two forms, a 'permissive' heterotrimer and an 'inhibitory' heterohexamer. Interacts (via coiled-coil domain) with IDAS (via coiled-coil domain); this targets GMNN to the nucleus. The heterodimer formed by GMNN and MCIDAS has much lower affinity for CDT1 than the GMNN homodimer. Interacts with a subset of Hox proteins, affinity increasing from anterior to posterior types, the strongest interaction being with HOXB1, HOXC9 and HOXD10. Interacts with LRWD1 from G1/S to mitosis. Phosphorylated during mitosis. Phosphorylation at Ser-184 by CK2 results in enhanced binding to Hox proteins and more potent inhibitory effect on Hox transcriptional activity.

It is found in the cytoplasm. It localises to the nucleus. Its function is as follows. Inhibits DNA replication by preventing the incorporation of MCM complex into pre-replication complex (pre-RC). It is degraded during the mitotic phase of the cell cycle. Its destruction at the metaphase-anaphase transition permits replication in the succeeding cell cycle. Inhibits histone acetyltransferase activity of KAT7/HBO1 in a CDT1-dependent manner, inhibiting histone H4 acetylation and DNA replication licensing. Inhibits the transcriptional activity of a subset of Hox proteins, enrolling them in cell proliferative control. This chain is Geminin (GMNN), found in Homo sapiens (Human).